The primary structure comprises 67 residues: Large ribosomal subunit protein bL35 (67 aa).

Residues 1–11 (MPKLKTRKAAA) show a composition bias toward basic residues. Residues 1 to 22 (MPKLKTRKAAAKRFEATGSGKK) form a disordered region.

Belongs to the bacterial ribosomal protein bL35 family.

The protein is Large ribosomal subunit protein bL35 of Microcystis aeruginosa (strain NIES-843 / IAM M-2473).